A 234-amino-acid chain; its full sequence is Covalently-linked cell wall protein 14 (234 aa).

Positions 1-22 (MASFLKISTLIAIVSTLQTTLA) are cleaved as a signal peptide. Residues 23–109 (APPACLLACV…SSEESSASAS (87 aa)) enclose the CFEM domain. 4 disulfides stabilise this stretch: Cys-27–Cys-66, Cys-31–Cys-61, Cys-41–Cys-49, and Cys-51–Cys-82. Asp-46 contacts heme. The segment covering 86–207 (SSQSSSSESE…ASSSESTTAT (122 aa)) has biased composition (low complexity). Positions 86–208 (SSQSSSSESE…SSSESTTATG (123 aa)) are disordered. Gly-215 carries the GPI-anchor amidated glycine lipid modification. Positions 216–234 (SAAKVGLGALVGLVGAVLL) are cleaved as a propeptide — removed in mature form.

Belongs to the CCW14 family. Post-translationally, the GPI-anchor is attached to the protein in the endoplasmic reticulum and serves to target the protein to the cell surface. There, the glucosamine-inositol phospholipid moiety is cleaved off and the GPI-modified mannoprotein is covalently attached via its lipidless GPI glycan remnant to the 1,6-beta-glucan of the outer cell wall layer.

The protein resides in the secreted. Its subcellular location is the cell wall. It is found in the membrane. Functionally, beta-glucan associated cell wall protein involved in cell wall structure. May serve as cross-linking or coat-forming wall protein. This chain is Covalently-linked cell wall protein 14 (SSR1), found in Candida albicans (strain SC5314 / ATCC MYA-2876) (Yeast).